The following is a 502-amino-acid chain: 1-aminocyclopropane-1-carboxylate synthase-like protein 1 (502 aa).

A disordered region spans residues 1–24 (MFCLPQQESTAPTTCTGSASTQDM). Residue glutamate 106 participates in substrate binding. Residue lysine 324 is modified to N6-(pyridoxal phosphate)lysine.

The protein belongs to the class-I pyridoxal-phosphate-dependent aminotransferase family.

Does not catalyze the synthesis of 1-aminocyclopropane-1-carboxylate but is capable of catalyzing the deamination of L-vinylglycine. The protein is 1-aminocyclopropane-1-carboxylate synthase-like protein 1 (Accs) of Mus musculus (Mouse).